The primary structure comprises 466 residues: Communesin N16 acyltransferase cnsK (466 aa).

The protein belongs to the fumigaclavine B O-acetyltransferase family.

Its pathway is alkaloid biosynthesis. Communesin N16 acyltransferase; part of the gene cluster that mediates the biosynthesis of communesins, a prominent class of indole alkaloids with great potential as pharmaceuticals. Communesins are biosynthesized by the coupling of tryptamine and aurantioclavine, two building blocks derived from L-tryptophan. The L-tryptophan decarboxylase cnsB converts L-tryptophan to tryptamine, whereas the tryptophan dimethylallyltransferase cnsF converts L-tryptophan to 4-dimethylallyl tryptophan which is further transformed to aurantioclavine by the aurantioclavine synthase cnsA, probably aided by the catalase cnsD. The cytochrome P450 monooxygenase cnsC catalyzes the heterodimeric coupling between the two different indole moieties, tryptamine and aurantioclavine, to construct vicinal quaternary stereocenters and yield the heptacyclic communesin scaffold. The O-methyltransferase cnsE then methylates the communesin scaffold to produce communesin K, the simplest characterized communesin that contains the heptacyclic core. The dioxygenase cnsJ converts communesin K into communesin I. Acylation to introduce the hexadienyl group at position N16 of communesin I by the acyltransferase cnsK leads to the production of communesin B. The hexadienyl group is produced by the highly reducing polyketide synthase cnsI, before being hydrolytically removed from cnsI by the serine hydrolase cnsH, converted into hexadienyl-CoA by the CoA ligase cnsG, and then transferred to communesin I by cnsK. Surprisingly, cnsK may also be a promiscuous acyltransferase that can tolerate a range of acyl groups, including acetyl-, propionyl-, and butyryl-CoA, which lead to communesins A, G and H respectively. The roles of the alpha-ketoglutarate-dependent dioxygenases cnsM and cnsP have still to be determined. The chain is Communesin N16 acyltransferase cnsK from Penicillium expansum (Blue mold rot fungus).